The following is a 261-amino-acid chain: Homeobox-leucine zipper protein HOX24 (261 aa).

Disordered regions lie at residues 42–67 (AAAA…RKRR) and 160–188 (KLNE…NSVM). The span at 46–61 (GRGGGDGDGGGGGGGG) shows a compositional bias: gly residues. The homeobox DNA-binding region spans 61 to 121 (GGERKRRFTE…NKRARWRSKQ (61 aa)). The interval 120-164 (KQIEHDYAALRAQYDALHARVESLRQEKLALADQVDELRGKLNER) is leucine-zipper.

It belongs to the HD-ZIP homeobox family. Class I subfamily. Expressed in roots and panicles.

The protein resides in the nucleus. Its function is as follows. Probable transcription factor. This chain is Homeobox-leucine zipper protein HOX24 (HOX24), found in Oryza sativa subsp. japonica (Rice).